Consider the following 364-residue polypeptide: Mitoferrin-2 (364 aa).

Residues 1 to 17 (MELEGRGAGGVAGGPAA) are compositionally biased toward gly residues. Disordered stretches follow at residues 1–28 (MELE…ESAL) and 40–60 (GAGG…PDSG). The segment covering 18–27 (GPGRSPGESA) has biased composition (low complexity). Solcar repeat units follow at residues 70–158 (ATVT…LKKT), 168–252 (NSHI…LQEH), and 259–352 (YNPS…FKYL). 6 helical membrane passes run 72-91 (VTTH…CVMY), 133-152 (GLNV…FACY), 170-189 (HIAN…AAMN), 227-246 (SYTT…FMTY), 261-280 (PSSH…AATT), and 327-346 (GVQA…WSVY).

It belongs to the mitochondrial carrier (TC 2.A.29) family. As to expression, ubiquitous. Expressed in placenta, lung, kidney, pancreas, liver, brain, skeletal muscle and heart.

The protein resides in the mitochondrion inner membrane. The catalysed reaction is Fe(2+)(in) = Fe(2+)(out). Its function is as follows. Mitochondrial iron transporter that mediates iron uptake. Probably required for heme synthesis of hemoproteins and Fe-S cluster assembly in non-erythroid cells. In Homo sapiens (Human), this protein is Mitoferrin-2 (SLC25A28).